Here is a 531-residue protein sequence, read N- to C-terminus: Peptide chain release factor 3 (531 aa).

The 269-residue stretch at 10–278 (ARRRTFAIIS…DFVEHAPGPL (269 aa)) folds into the tr-type G domain. Residues 19-26 (SHPDAGKT), 87-91 (DTPGH), and 141-144 (NKLD) each bind GTP.

The protein belongs to the TRAFAC class translation factor GTPase superfamily. Classic translation factor GTPase family. PrfC subfamily.

Its subcellular location is the cytoplasm. Increases the formation of ribosomal termination complexes and stimulates activities of RF-1 and RF-2. It binds guanine nucleotides and has strong preference for UGA stop codons. It may interact directly with the ribosome. The stimulation of RF-1 and RF-2 is significantly reduced by GTP and GDP, but not by GMP. The protein is Peptide chain release factor 3 of Thioalkalivibrio sulfidiphilus (strain HL-EbGR7).